A 754-amino-acid chain; its full sequence is Probable galactinol--sucrose galactosyltransferase 1 (754 aa).

The protein belongs to the glycosyl hydrolases 36 family.

The enzyme catalyses alpha-D-galactosyl-(1-&gt;3)-1D-myo-inositol + sucrose = raffinose + myo-inositol. Functionally, transglycosidase operating by a ping-pong reaction mechanism. Involved in the synthesis of raffinose, a major soluble carbohydrate in seeds, roots and tubers. The polypeptide is Probable galactinol--sucrose galactosyltransferase 1 (RFS1) (Arabidopsis thaliana (Mouse-ear cress)).